The following is a 1060-amino-acid chain: DNA topoisomerase 1 (1060 aa).

Positions M1–K141 constitute a Toprim domain. E7 and D107 together coordinate Mg(2+). Residues N156–L947 form the Topo IA-type catalytic domain. The interval S196 to Q201 is interaction with DNA. The region spanning L482–I591 is the DOD-type homing endonuclease domain. Y690 serves as the catalytic O-(5'-phospho-DNA)-tyrosine intermediate. The C4-type 1 zinc-finger motif lies at C978–C1006. The segment at C1025–C1050 adopts a C4-type 2; atypical zinc-finger fold.

Belongs to the type IA topoisomerase family. Monomer. It depends on Mg(2+) as a cofactor. Post-translationally, this protein undergoes a protein self splicing that involves a post-translational excision of the intervening region (intein) followed by peptide ligation.

It catalyses the reaction ATP-independent breakage of single-stranded DNA, followed by passage and rejoining.. Releases the supercoiling and torsional tension of DNA, which is introduced during the DNA replication and transcription, by transiently cleaving and rejoining one strand of the DNA duplex. Introduces a single-strand break via transesterification at a target site in duplex DNA. The scissile phosphodiester is attacked by the catalytic tyrosine of the enzyme, resulting in the formation of a DNA-(5'-phosphotyrosyl)-enzyme intermediate and the expulsion of a 3'-OH DNA strand. The free DNA strand then undergoes passage around the unbroken strand, thus removing DNA supercoils. Finally, in the religation step, the DNA 3'-OH attacks the covalent intermediate to expel the active-site tyrosine and restore the DNA phosphodiester backbone. This chain is DNA topoisomerase 1 (topA), found in Pyrococcus furiosus (strain ATCC 43587 / DSM 3638 / JCM 8422 / Vc1).